Reading from the N-terminus, the 180-residue chain is Ribosome maturation factor RimM (180 aa).

Residues 104–177 (PEEFHDHQLV…RVVVDPPGGL (74 aa)) enclose the PRC barrel domain.

This sequence belongs to the RimM family. As to quaternary structure, binds ribosomal protein uS19.

The protein resides in the cytoplasm. Functionally, an accessory protein needed during the final step in the assembly of 30S ribosomal subunit, possibly for assembly of the head region. Essential for efficient processing of 16S rRNA. May be needed both before and after RbfA during the maturation of 16S rRNA. It has affinity for free ribosomal 30S subunits but not for 70S ribosomes. The protein is Ribosome maturation factor RimM of Salinispora arenicola (strain CNS-205).